The primary structure comprises 57 residues: Large ribosomal subunit protein bL33 (57 aa).

The protein belongs to the bacterial ribosomal protein bL33 family.

This Shewanella pealeana (strain ATCC 700345 / ANG-SQ1) protein is Large ribosomal subunit protein bL33.